The chain runs to 228 residues: 5'-methylthioadenosine/S-adenosylhomocysteine nucleosidase (228 aa).

E11 serves as the catalytic Proton acceptor. Residues G77, I151, and 172–173 (ME) contribute to the substrate site. The active-site Proton donor is D196.

The protein belongs to the PNP/UDP phosphorylase family. MtnN subfamily.

It carries out the reaction S-adenosyl-L-homocysteine + H2O = S-(5-deoxy-D-ribos-5-yl)-L-homocysteine + adenine. The catalysed reaction is S-methyl-5'-thioadenosine + H2O = 5-(methylsulfanyl)-D-ribose + adenine. The enzyme catalyses 5'-deoxyadenosine + H2O = 5-deoxy-D-ribose + adenine. It participates in amino-acid biosynthesis; L-methionine biosynthesis via salvage pathway; S-methyl-5-thio-alpha-D-ribose 1-phosphate from S-methyl-5'-thioadenosine (hydrolase route): step 1/2. In terms of biological role, catalyzes the irreversible cleavage of the glycosidic bond in both 5'-methylthioadenosine (MTA) and S-adenosylhomocysteine (SAH/AdoHcy) to adenine and the corresponding thioribose, 5'-methylthioribose and S-ribosylhomocysteine, respectively. Also cleaves 5'-deoxyadenosine, a toxic by-product of radical S-adenosylmethionine (SAM) enzymes, into 5-deoxyribose and adenine. This chain is 5'-methylthioadenosine/S-adenosylhomocysteine nucleosidase, found in Staphylococcus aureus (strain JH1).